A 293-amino-acid polypeptide reads, in one-letter code: Pyridoxal 5'-phosphate synthase subunit PdxS (293 aa).

Residue Asp-25 participates in D-ribose 5-phosphate binding. The active-site Schiff-base intermediate with D-ribose 5-phosphate is Lys-82. Asp-103 lines the D-ribulose 5-phosphate pocket. Gly-154 lines the D-ribose 5-phosphate pocket. Arg-166 provides a ligand contact to D-glyceraldehyde 3-phosphate. Residues Gly-215 and 236–237 (GS) each bind D-ribose 5-phosphate.

This sequence belongs to the PdxS/SNZ family. In terms of assembly, homohexamer and homododecamer. In the presence of PdxT, forms a dodecamer of heterodimers.

The catalysed reaction is aldehydo-D-ribose 5-phosphate + D-glyceraldehyde 3-phosphate + L-glutamine = pyridoxal 5'-phosphate + L-glutamate + phosphate + 3 H2O + H(+). Its pathway is cofactor biosynthesis; pyridoxal 5'-phosphate biosynthesis. Catalyzes the formation of pyridoxal 5'-phosphate from ribose 5-phosphate (RBP), glyceraldehyde 3-phosphate (G3P) and ammonia. The ammonia is provided by the PdxT subunit. Can also use ribulose 5-phosphate and dihydroxyacetone phosphate as substrates, resulting from enzyme-catalyzed isomerization of RBP and G3P, respectively. This is Pyridoxal 5'-phosphate synthase subunit PdxS from Thermotoga maritima (strain ATCC 43589 / DSM 3109 / JCM 10099 / NBRC 100826 / MSB8).